The chain runs to 139 residues: Trafficking protein particle complex subunit 2-like protein (139 aa).

It belongs to the TRAPP small subunits family. Sedlin subfamily. In terms of assembly, component of the multisubunit TRAPP (transport protein particle) complex, which includes at least TRAPPC2, TRAPPC2L, TRAPPC3, TRAPPC3L, TRAPPC4, TRAPPC5, TRAPPC8, TRAPPC9, TRAPPC10, TRAPPC11 and TRAPPC12. Interacts with the heterodimer TRAPPC3-TRAPPC6A.

It localises to the cytoplasm. It is found in the perinuclear region. Its subcellular location is the endoplasmic reticulum. The protein resides in the golgi apparatus. Its function is as follows. May play a role in vesicular transport from endoplasmic reticulum to Golgi. The chain is Trafficking protein particle complex subunit 2-like protein (Trappc2l) from Mus musculus (Mouse).